Here is a 145-residue protein sequence, read N- to C-terminus: Aminoglycoside N(6')-acetyltransferase type 1 (145 aa).

One can recognise an N-acetyltransferase domain in the interval Met1–Asp145. Trp22, Tyr65, and Glu78 together coordinate substrate. Position 80–82 (Ile80–Val82) interacts with acetyl-CoA. Asp114 contributes to the substrate binding site. Asn119 contributes to the acetyl-CoA binding site. Substrate is bound at residue Glu135.

In terms of assembly, homodimer.

It carries out the reaction kanamycin B + acetyl-CoA = N(6')-acetylkanamycin B + CoA + H(+). Functionally, catalyzes the transfer of an acetyl group from acetyl-CoA to the 6'-amino group of aminoglycoside molecules conferring resistance to antibiotics containing the purpurosamine ring including amikacin, kanamycin, tobramycin and netilmicin. The chain is Aminoglycoside N(6')-acetyltransferase type 1 from Acinetobacter haemolyticus.